Consider the following 71-residue polypeptide: UPF0346 protein SPT_1257 (71 aa).

The protein belongs to the UPF0346 family.

The protein is UPF0346 protein SPT_1257 of Streptococcus pneumoniae (strain Taiwan19F-14).